The primary structure comprises 209 residues: Cytochrome bo(3) ubiquinol oxidase subunit 3 (209 aa).

Residues 1–29 (MSTAVLNKHLADAHEVGHDHDHAHDSGGN) lie on the Cytoplasmic side of the membrane. A helical membrane pass occupies residues 30 to 50 (TVFGFWLYLMTDCVLFASVFA). Residues 51–72 (TYAVLVHHTAGGPSGKDIFELP) lie on the Periplasmic side of the membrane. The chain crosses the membrane as a helical span at residues 73 to 93 (YVLVETAILLVSSCTYGLAML). Residues 94–102 (SAHKGAKGQ) lie on the Cytoplasmic side of the membrane. Residues 103 to 123 (AIAWLGVTFLLGAAFIGMEIN) traverse the membrane as a helical segment. Topologically, residues 124-143 (EFHHLIAEGFGPSRSAFLSS) are periplasmic. A helical membrane pass occupies residues 144–164 (FFTLVGMHGLHVSAGLLWMLV). The Cytoplasmic segment spans residues 165–186 (LMAQIWTRGLTAQNNTRMMCLS). Residues 187–207 (LFWHFLDIVWICVFTVVYLMG) form a helical membrane-spanning segment. At 208–209 (AL) the chain is on the periplasmic side.

This sequence belongs to the cytochrome c oxidase subunit 3 family. Heterooctamer of two A chains, two B chains, two C chains and two D chains.

It localises to the cell inner membrane. In terms of biological role, cytochrome bo(3) ubiquinol terminal oxidase is the component of the aerobic respiratory chain of E.coli that predominates when cells are grown at high aeration. Has proton pump activity across the membrane in addition to electron transfer, pumping 2 protons/electron. This is Cytochrome bo(3) ubiquinol oxidase subunit 3 (cyoC) from Pseudomonas aeruginosa (strain ATCC 15692 / DSM 22644 / CIP 104116 / JCM 14847 / LMG 12228 / 1C / PRS 101 / PAO1).